Consider the following 269-residue polypeptide: Hydroxyethylthiazole kinase (269 aa).

M41 contacts substrate. Residues R117 and S165 each contribute to the ATP site. Residue G192 participates in substrate binding.

It belongs to the Thz kinase family. Mg(2+) serves as cofactor.

The catalysed reaction is 5-(2-hydroxyethyl)-4-methylthiazole + ATP = 4-methyl-5-(2-phosphooxyethyl)-thiazole + ADP + H(+). It functions in the pathway cofactor biosynthesis; thiamine diphosphate biosynthesis; 4-methyl-5-(2-phosphoethyl)-thiazole from 5-(2-hydroxyethyl)-4-methylthiazole: step 1/1. In terms of biological role, catalyzes the phosphorylation of the hydroxyl group of 4-methyl-5-beta-hydroxyethylthiazole (THZ). The chain is Hydroxyethylthiazole kinase from Actinobacillus succinogenes (strain ATCC 55618 / DSM 22257 / CCUG 43843 / 130Z).